Here is a 303-residue protein sequence, read N- to C-terminus: MSAVPVSDVHAYLTGLQDNIVQALEQAGGESFRTDTWQRPEGGGGVSRLIEGGQLLERAGVLFSHVHGTRLPPSASAHRPELAGRSWQAMGVSLVLHPRNPYVPTTHMNVRMFVAAARPGHDENDVFWFGGGLDLTPYYAFEDDARHFHQVCRAALDPHGAAYYPQYKRWCDEYFYLKHRQEMRGVGGVFFDDLNEPGFDASFALLRSVGDAFLPAYLPIVQRRRDTPYTQAQRDFQAYRRGRYVEFNLVFDRGTLFGLQSGGRTESILLSMPPMAQWRYDWQPAAGSPEAALAGFLQPRDWA.

Residue S93 coordinates substrate. A divalent metal cation contacts are provided by H97 and H107. H107 (proton donor) is an active-site residue. 109-111 contacts substrate; it reads NVR. Residues H149 and H179 each coordinate a divalent metal cation. Residues 244 to 279 form an important for dimerization region; sequence YVEFNLVFDRGTLFGLQSGGRTESILLSMPPMAQWR. 262-264 serves as a coordination point for substrate; it reads GGR.

Belongs to the aerobic coproporphyrinogen-III oxidase family. Homodimer. A divalent metal cation is required as a cofactor.

The protein resides in the cytoplasm. It carries out the reaction coproporphyrinogen III + O2 + 2 H(+) = protoporphyrinogen IX + 2 CO2 + 2 H2O. It functions in the pathway porphyrin-containing compound metabolism; protoporphyrin-IX biosynthesis; protoporphyrinogen-IX from coproporphyrinogen-III (O2 route): step 1/1. Involved in the heme biosynthesis. Catalyzes the aerobic oxidative decarboxylation of propionate groups of rings A and B of coproporphyrinogen-III to yield the vinyl groups in protoporphyrinogen-IX. This Bordetella petrii (strain ATCC BAA-461 / DSM 12804 / CCUG 43448) protein is Oxygen-dependent coproporphyrinogen-III oxidase.